The primary structure comprises 329 residues: Short-chain dehydrogenase/reductase prx4 (329 aa).

The signal sequence occupies residues Met-1–Cys-21. The NADP(+) site is built by Ser-58, Ile-60, and Asn-81. N-linked (GlcNAc...) asparagine glycosylation is present at Asn-91. NADP(+) contacts are provided by Asp-98, Asn-121, Lys-161, Tyr-194, Lys-198, and Thr-229. Tyr-194 acts as the Proton acceptor in catalysis. The Lowers pKa of active site Tyr role is filled by Lys-198. Residues Gly-238–Val-258 form a helical membrane-spanning segment.

It belongs to the short-chain dehydrogenases/reductases (SDR) family.

It is found in the membrane. The protein operates within sesquiterpene biosynthesis. Short-chain dehydrogenase/reductase; part of the gene cluster that mediates the biosynthesis of PR-toxin, a bicyclic sesquiterpene belonging to the eremophilane class and acting as a mycotoxin. The first step of the pathway is catalyzed by the aristolochene synthase which performs the cyclization of trans,trans-farnesyl diphosphate (FPP) to the bicyclic sesquiterpene aristolochene. Following the formation of aristolochene, the non-oxygenated aristolochene is converted to the trioxygenated intermediate eremofortin B, via 7-epi-neopetasone. This conversion appears to involve three enzymes, a hydroxysterol oxidase-like enzyme, the quinone-oxidase prx3 that forms the quinone-type-structure in the bicyclic nucleus of aristolochene with the C8-oxo group and the C-3 hydroxyl group, and the P450 monooxygenase prx9 that introduces the epoxide at the double bond between carbons 1 and 2. No monoxy or dioxy-intermediates have been reported to be released to the broth, so these three early oxidative reactions may be coupled together. Eremofortin B is further oxidized by another P450 monooxygenase, that introduces a second epoxide between carbons 7 and 11 prior to acetylation to eremofortin A by the acetyltransferase prx11. The second epoxidation may be performed by a second P450 monooxygenase. After the acetylation step, eremofortin A is converted to eremofortin C and then to PR-toxin. First the conversion of eremofortin A to eremofortin C proceeds by oxidation of the side chain of the molecule at C-12 and is catalyzed by the short-chain oxidoreductase prx1. The cytochrome P450 monooxygenase prx8 also plays a role in this step. The primary alcohol formed at C-12 is finally oxidized by the short-chain alcohol dehydrogenase prx4 that forms PR-toxin. The polypeptide is Short-chain dehydrogenase/reductase prx4 (Penicillium rubens (strain ATCC 28089 / DSM 1075 / NRRL 1951 / Wisconsin 54-1255) (Penicillium chrysogenum)).